The chain runs to 246 residues: Transcriptional regulatory protein LytR (246 aa).

One can recognise a Response regulatory domain in the interval 2 to 116; it reads KALIIDDEPL…RIEQAVNKVR (115 aa). Position 53 is a 4-aspartylphosphate (Asp-53). The HTH LytTR-type domain maps to 141 to 245; sequence LPVEIDDKIH…MKDFKASIGL (105 aa).

As to quaternary structure, homodimer; when phosphorylated. Post-translationally, phosphorylated and dephosphorylated by LytS.

It localises to the cytoplasm. Member of the two-component regulatory system LytR/LytS that regulates genes involved in autolysis, programmed cell death, biofilm formation and cell wall metabolism. Also participates in sensing and responding to host defense cationic antimicrobial peptides (HDPs). Upon phosphorylation by LytS, functions as a transcription regulator by direct binding to promoter regions of target genes including lrgA and lrgB, to positively regulate their expression. The chain is Transcriptional regulatory protein LytR (lytR) from Staphylococcus aureus (strain bovine RF122 / ET3-1).